The following is a 153-amino-acid chain: Fucose mutarotase (153 aa).

The active-site Proton donor is the His-24. Substrate is bound at residue Asp-32. Residue Asp-69 is part of the active site. Residues Met-79, Tyr-120, Tyr-138, and Asn-140 each coordinate substrate. Residue Tyr-120 is part of the active site.

This sequence belongs to the RbsD / FucU family. As to quaternary structure, mainly homodimer, but also exists as homotetramer, homooctamer, and homodecamer. The homodimeric form seems catalytically inactive. Widely expressed in various tissues and cell lines, including kidney, liver, and pancreas, marginally in muscle and testis.

It carries out the reaction alpha-L-fucose = beta-L-fucose. It functions in the pathway carbohydrate metabolism; L-fucose metabolism. Involved in the interconversion between alpha- and beta-L-fucoses. L-Fucose (6-deoxy-L-galactose) exists as alpha-L-fucose (29.5%) and beta-L-fucose (70.5%), the beta-form is metabolized through the salvage pathway. GDP-L-fucose formed either by the de novo or salvage pathways is transported into the endoplasmic reticulum, where it serves as a substrate for N- and O-glycosylations by fucosyltransferases. Fucosylated structures expressed on cell surfaces or secreted in biological fluids are believed to play a critical role in cell-cell adhesion and recognition processes. In Mus musculus (Mouse), this protein is Fucose mutarotase (Fuom).